The following is a 318-amino-acid chain: Acyl-CoA dehydrogenase IpdE2 (318 aa).

FAD-binding residues include Arg210 and Gly277.

This sequence belongs to the acyl-CoA dehydrogenase family. Heterotetramer composed of 2 IpdE1 subunits and 2 IpdE2 subunits. FAD is required as a cofactor.

It carries out the reaction 3-[(3aS,4S,5R,7aS)-5-hydroxy-7a-methyl-1-oxo-octahydro-1H-inden-4-yl]propanoyl-CoA + A = (2E)-3-[(3aS,4S,5R,7aS)-5-hydroxy-7a-methyl-1-oxo-octahydro-1H-inden-4-yl]prop-2-enoyl-CoA + AH2. It functions in the pathway steroid metabolism; cholesterol degradation. Its function is as follows. Involved in cholesterol degradation. Catalyzes the dehydrogenation of 5OH-HIP-CoA to 5OH-HIPE-CoA. Can also use octanoyl-CoA and dihydroferuloyl-CoA, with lower efficiency. Cannot use 3-oxo-4-pregnene-20-carboxyl-CoA (3-OPC-CoA). In Mycobacterium tuberculosis (strain ATCC 25618 / H37Rv), this protein is Acyl-CoA dehydrogenase IpdE2.